The chain runs to 513 residues: Interferon-induced, double-stranded RNA-activated protein kinase (513 aa).

Ala2 is modified (N-acetylalanine). One can recognise a DRBM 1 domain in the interval 8–76 (FYVDKLNKYS…AKLAVEILDN (69 aa)). Lys68 is covalently cross-linked (Glycyl lysine isopeptide (Lys-Gly) (interchain with G-Cter in ISG15)). Ser82 bears the Phosphoserine mark. Thr84 bears the Phosphothreonine mark. The 68-residue stretch at 95–162 (NYIGLVNSFA…AKNAYQKLSE (68 aa)) folds into the DRBM 2 domain. A Phosphotyrosine; by autocatalysis modification is found at Tyr96. Residue Lys154 forms a Glycyl lysine isopeptide (Lys-Gly) (interchain with G-Cter in ISG15) linkage. Tyr157 carries the phosphotyrosine; by autocatalysis modification. Thr227 is subject to Phosphothreonine. The tract at residues 235 to 513 (DFEDIEEIGS…ISEKKKRNTC (279 aa)) is interaction with TRAF5. The Protein kinase domain maps to 236–502 (FEDIEEIGSG…EILKTLAEWK (267 aa)). An ATP-binding site is contributed by 242 to 250 (IGSGGFGQV). Position 262 is a phosphotyrosine; by autocatalysis (Tyr262). Lys265 is an ATP binding site. Residue Asp373 is the Proton acceptor of the active site. A phosphothreonine; by autocatalysis mark is found at Thr406 and Thr411. Ser416 carries the post-translational modification Phosphoserine.

It belongs to the protein kinase superfamily. Ser/Thr protein kinase family. GCN2 subfamily. Homodimer. Interacts with DNAJC3. Interacts with STRBP. Forms a complex with FANCA, FANCC, FANCG and HSP70. Interacts with ADAR/ADAR1. The inactive form interacts with NCK1 and GSN. Interacts (via the kinase catalytic domain) with STAT3 (via SH2 domain), TRAF2 (C-terminus), TRAF5 (C-terminus) and TRAF6 (C-terminus). Interacts with MAP2K6, IKBKB/IKKB, IRS1, NPM1, TARBP2, NLRP1, NLRP3, NLRC4 and AIM2. Interacts (via DRBM 1 domain) with DUS2L (via DRBM domain). Interacts with DHX9 (via N-terminus) and this interaction is dependent upon activation of the kinase. In terms of processing, autophosphorylated on several Ser, Thr and Tyr residues. Autophosphorylation of Thr-411 is dependent on Thr-406 and is stimulated by dsRNA binding and dimerization. Autophosphorylation apparently leads to the activation of the kinase. Tyrosine autophosphorylation is essential for efficient dsRNA-binding, dimerization, and kinase activation.

Its subcellular location is the cytoplasm. The protein localises to the nucleus. It localises to the perinuclear region. The catalysed reaction is L-seryl-[protein] + ATP = O-phospho-L-seryl-[protein] + ADP + H(+). It catalyses the reaction L-threonyl-[protein] + ATP = O-phospho-L-threonyl-[protein] + ADP + H(+). It carries out the reaction L-tyrosyl-[protein] + ATP = O-phospho-L-tyrosyl-[protein] + ADP + H(+). Its activity is regulated as follows. Initially produced in an inactive form and is activated by binding to viral dsRNA, which causes dimerization and autophosphorylation in the activation loop and stimulation of function. ISGylation can activate it in the absence of viral infection. Can also be activated by heparin, pro-inflammatory stimuli, growth factors, cytokines, oxidative stress and the cellular protein PRKRA. Activity is markedly stimulated by manganese ions. Activation is blocked by the cellular proteins TARBP2, DUS2L, NPM1, NCK1 and ADAR. In terms of biological role, IFN-induced dsRNA-dependent serine/threonine-protein kinase that phosphorylates the alpha subunit of eukaryotic translation initiation factor 2 (EIF2S1/eIF-2-alpha) and plays a key role in the innate immune response to viral infection. Inhibits viral replication via the integrated stress response (ISR): EIF2S1/eIF-2-alpha phosphorylation in response to viral infection converts EIF2S1/eIF-2-alpha in a global protein synthesis inhibitor, resulting to a shutdown of cellular and viral protein synthesis, while concomitantly initiating the preferential translation of ISR-specific mRNAs, such as the transcriptional activator ATF4. Exerts its antiviral activity on a wide range of DNA and RNA viruses. Also involved in the regulation of signal transduction, apoptosis, cell proliferation and differentiation: phosphorylates other substrates including p53/TP53, PPP2R5A, DHX9, ILF3 and IRS1. In addition to serine/threonine-protein kinase activity, also has tyrosine-protein kinase activity and phosphorylates CDK1 at 'Tyr-4' upon DNA damage, facilitating its ubiquitination and proteasomal degradation. Either as an adapter protein and/or via its kinase activity, can regulate various signaling pathways (p38 MAP kinase, NF-kappa-B and insulin signaling pathways) and transcription factors (JUN, STAT1, STAT3, IRF1, ATF3) involved in the expression of genes encoding pro-inflammatory cytokines and IFNs. Activates the NF-kappa-B pathway via interaction with IKBKB and TRAF family of proteins and activates the p38 MAP kinase pathway via interaction with MAP2K6. Can act as both a positive and negative regulator of the insulin signaling pathway (ISP). Negatively regulates ISP by inducing the inhibitory phosphorylation of insulin receptor substrate 1 (IRS1) at 'Ser-312' and positively regulates ISP via phosphorylation of PPP2R5A which activates FOXO1, which in turn up-regulates the expression of insulin receptor substrate 2 (IRS2). Can regulate NLRP3 inflammasome assembly and the activation of NLRP3, NLRP1, AIM2 and NLRC4 inflammasomes. Plays a role in the regulation of the cytoskeleton by binding to gelsolin (GSN), sequestering the protein in an inactive conformation away from actin. The chain is Interferon-induced, double-stranded RNA-activated protein kinase (Eif2ak2) from Rattus norvegicus (Rat).